A 681-amino-acid polypeptide reads, in one-letter code: MAMPGKSSHAPSRLLLALLTLILLALPARPEPLAAPDAALAQALFGADGPVVLDRRETPVPGWGVSRDGRMLGVIGSTWEIAATTGYSGKPLDVLVAVTPQGVIAGARLVRQTEPVLSLGISEAHIAAYVDGFRGVDLSQGEGQGRALPDVISRATVSTGVIRDGILRSARVLAQAQGLGGGGIDRVGYRPATWADLLAEGAFGHALVSMADAARAFAGAKVPVEPSDAPFLDLYAGLIDPPTVGRNLLGAQDFTAAAGALQPGQALVAVLSRGLYSPRGTEWRRSGRFERIAFEQGALRIEPDDGDFVMVEKLALPDAPAFKEISLFRLNIDPLAGGIDPRRPFDLVVTATRPLAAGDEAALPIRATIRLPEAYAVAEAPAVPLWQEFWLKKIPGIAVVAAMLFVLALILFGQEALVRRPMLWRRVRLGFLATTLVVLGWGLNGQLSVVQVVAFLNALLSGFRWETFLIEPIIFLIWSAVALGLLFWGRGVFCGWLCPFGALQELANAAAQRLGVRQIAVPQALHERLWVIKYTLFVAIVALSFYSMEQALILAEVEPFKTVISMRFLRAWPFVLFALAVLAGGLFIERFYCRYLCPLGAGLAIPAKLKIFDWLRRRPQCGRECRLCETKCTVGAIDPLGRINPNECVLCLRCQVVMNDPGTCPVLKRRARSAAPTGDAP.

Residues M1 to P30 form the signal peptide. 5 helical membrane passes run I394–Q414, L436–L456, F468–W488, T535–A555, and F568–I588.

This sequence to P.stutzeri NosR.

The protein localises to the cell membrane. The sequence is that of Protein NirI (nirI) from Paracoccus denitrificans (strain Pd 1222).